Reading from the N-terminus, the 208-residue chain is Photosystem I reaction center subunit II-1, chloroplastic (208 aa).

A chloroplast-targeting transit peptide spans Met1–Ala45. Phosphothreonine is present on Thr48. Positions Asp49 to Leu72 are disordered. Positions Ser50–Pro64 are enriched in low complexity. The tract at residues Arg141 to Thr149 is ferredoxin and ferredoxin-oxidoreductase binding.

Belongs to the PsaD family. In terms of assembly, interacts with PGRL1A and PGRL1B. In terms of processing, phosphorylated by a threonine specific thylakoid kinase in a light activated and redox-dependent manner.

It is found in the plastid. The protein resides in the chloroplast thylakoid membrane. Its function is as follows. PsaD can form complexes with ferredoxin and ferredoxin-oxidoreductase in photosystem I (PS I) reaction center. PSAD may encode the ferredoxin-docking protein. The sequence is that of Photosystem I reaction center subunit II-1, chloroplastic (psaD1) from Arabidopsis thaliana (Mouse-ear cress).